We begin with the raw amino-acid sequence, 142 residues long: Large ribosomal subunit protein uL11 (142 aa).

Belongs to the universal ribosomal protein uL11 family. In terms of assembly, part of the ribosomal stalk of the 50S ribosomal subunit. Interacts with L10 and the large rRNA to form the base of the stalk. L10 forms an elongated spine to which L12 dimers bind in a sequential fashion forming a multimeric L10(L12)X complex. In terms of processing, one or more lysine residues are methylated.

Forms part of the ribosomal stalk which helps the ribosome interact with GTP-bound translation factors. In Shewanella amazonensis (strain ATCC BAA-1098 / SB2B), this protein is Large ribosomal subunit protein uL11.